Reading from the N-terminus, the 419-residue chain is MSPSAITESPRNSVVDHTSGLQVDSLAVQGPFPSFHGYDHVTWWVGNAKQAASYYNTLFGMKIIAYRGLETGSRYFASYLVGKEDVRFVFTSPIRSHVHLPEDEPISDEDRALLKEMHAHLEKHGDAVKDVCFEVDNVQGVYERAVQQGAVSIAPPKTLSDKEHGSVTMAVIQTYGDTTHTLLSRDNFRGTFLPGFRDVNRQPAAYSALAPVPLQRIDHCVGNQDWDDMRAACDFYERCLSFHRFWSVDDNQISTDFSALNSIVMASPNNVVKMPINEPAKGKKRSQIEEYVTFNSGAGVQHIALLTSDIITTVEAMRSRGVEFIEVPHTYYDTMRRRLKTEKRDWELQEDFDRLVRNNILIDYDEGGYLLQLFTRPLMDRPTVFIEIIQRNEFDGFGAGNFKSLFEAIEREQAERGNL.

VOC domains are found at residues 37-185 and 216-376; these read GYDH…LLSR and RIDH…LFTR. Fe cation-binding residues include H219, H302, and E387.

This sequence belongs to the 4HPPD family. Fe cation is required as a cofactor.

The catalysed reaction is 3-(4-hydroxyphenyl)pyruvate + O2 = homogentisate + CO2. It participates in amino-acid degradation; L-phenylalanine degradation; acetoacetate and fumarate from L-phenylalanine: step 3/6. The polypeptide is 4-hydroxyphenylpyruvate dioxygenase (HPD4) (Pyricularia oryzae (strain 70-15 / ATCC MYA-4617 / FGSC 8958) (Rice blast fungus)).